A 209-amino-acid chain; its full sequence is dTTP/UTP pyrophosphatase (209 aa).

Catalysis depends on D79, which acts as the Proton acceptor.

Belongs to the Maf family. YhdE subfamily. Requires a divalent metal cation as cofactor.

The protein resides in the cytoplasm. The enzyme catalyses dTTP + H2O = dTMP + diphosphate + H(+). It catalyses the reaction UTP + H2O = UMP + diphosphate + H(+). In terms of biological role, nucleoside triphosphate pyrophosphatase that hydrolyzes dTTP and UTP. May have a dual role in cell division arrest and in preventing the incorporation of modified nucleotides into cellular nucleic acids. This chain is dTTP/UTP pyrophosphatase, found in Chelativorans sp. (strain BNC1).